We begin with the raw amino-acid sequence, 908 residues long: MKIIFPILSNPVFRRTVKLLLCLLWIGYSQGTTHVLRFGGIFEYVESGPMGAEELAFRFAVNTINRNRTLLPNTTLTYDTQKINLYDSFEASKKACDQLSLGVAAIFGPSHSSSANAVQSICNALGVPHIQTRWKHQVSDNKDSFYVSLYPDFSSLSRAILDLVQFFKWKTVTVVYDDSTGLIRLQELIKAPSRYNLRLKIRQLPADTKDAKPLLKEMKRGKEFHVIFDCSHEMAAGILKQALAMGMMTEYYHYIFTTLDLFALDVEPYRYSGVNMTGFRILNTENTQVSSIIEKWSMERLQAPPKPDSGLLDGFMTTDAALMYDAVHVVSVAVQQFPQMTVSSLQCNRHKPWRFGTRFMSLIKEAHWEGLTGRITFNKTNGLRTDFDLDVISLKEEGLEKIGTWDPASGLNMTESQKGKPANITDSLSNRSLIVTTILEEPYVLFKKSDKPLYGNDRFEGYCIDLLRELSTILGFTYEIRLVEDGKYGAQDDANGQWNGMVRELIDHKADLAVAPLAITYVREKVIDFSKPFMTLGISILYRKPNGTNPGVFSFLNPLSPDIWMYVLLACLGVSCVLFVIARFSPYEWYNPHPCNPDSDVVENNFTLLNSFWFGVGALMRQGSELMPKALSTRIVGGIWWFFTLIIISSYTANLAAFLTVERMESPIDSADDLAKQTKIEYGAVEDGATMTFFKKSKISTYDKMWAFMSSRRQSVLVKSNEEGIQRVLTSDYAFLMESTTIEFVTQRNCNLTQIGGLIDSKGYGVGTPMGSPYRDKITIAILQLQEEGKLHMMKEKWWRGNGCPEEESKEASALGVQNIGGIFIVLAAGLVLSVFVAVGEFLYKSKKNAQLEKRSFCSAMVEELRMSLKCQRRLKHKPQAPVIVKTEEVINMHTFNDRRLPGKETMA.

A signal peptide spans 1–31 (MKIIFPILSNPVFRRTVKLLLCLLWIGYSQG). At 32 to 561 (TTHVLRFGGI…VFSFLNPLSP (530 aa)) the chain is on the extracellular side. Residues Asn67, Asn73, Asn275, Asn378, Asn412, Asn423, and Asn430 are each glycosylated (N-linked (GlcNAc...) asparagine). An intrachain disulfide couples Cys96 to Cys347. Residues Pro516, Ala518, and Arg523 each contribute to the L-glutamate site. Residue Asn546 is glycosylated (N-linked (GlcNAc...) asparagine). A helical membrane pass occupies residues 562–582 (DIWMYVLLACLGVSCVLFVIA). The Cytoplasmic segment spans residues 583–638 (RFSPYEWYNPHPCNPDSDVVENNFTLLNSFWFGVGALMRQGSELMPKALSTRIVGG). A helical membrane pass occupies residues 639–659 (IWWFFTLIIISSYTANLAAFL). At 660–819 (TVERMESPID…KEASALGVQN (160 aa)) the chain is on the extracellular side. Ala689, Thr690, and Glu738 together coordinate L-glutamate. A disulfide bond links Cys750 and Cys804. The N-linked (GlcNAc...) asparagine glycan is linked to Asn751. The helical transmembrane segment at 820–840 (IGGIFIVLAAGLVLSVFVAVG) threads the bilayer. Over 841–908 (EFLYKSKKNA…RRLPGKETMA (68 aa)) the chain is Cytoplasmic. A phosphoserine; by PKC mark is found at Ser846 and Ser868. Residue Lys886 forms a Glycyl lysine isopeptide (Lys-Gly) (interchain with G-Cter in SUMO1) linkage.

The protein belongs to the glutamate-gated ion channel (TC 1.A.10.1) family. GRIK2 subfamily. As to quaternary structure, homotetramer and heterotetramer with GRIK5. Tetramers may be formed by the dimerization of dimers. Assembles into a kainate-gated homomeric channel that does not bind AMPA. Can form functional heteromeric receptors with GRIK3, GRIK4 and GRIK5. Interacts with NETO2. Interacts with DLG4. Interacts with NETO2. Interacts (via C-terminus) with KLHL17 (via kelch repeats); the interaction targets GRIK2 for degradation via ubiquitin-proteasome pathway. In terms of processing, sumoylation mediates kainate receptor-mediated endocytosis and regulates synaptic transmission. Sumoylation is enhanced by PIAS3 and desumoylated by SENP1. Ubiquitinated. Ubiquitination regulates the GRIK2 levels at the synapse by leading kainate receptor degradation through proteasome. Post-translationally, phosphorylated by PKC at Ser-868 upon agonist activation, this directly enhance sumoylation.

The protein resides in the cell membrane. It localises to the postsynaptic cell membrane. The catalysed reaction is Ca(2+)(in) = Ca(2+)(out). It catalyses the reaction Na(+)(in) = Na(+)(out). Its activity is regulated as follows. Cold receptor activity activated by temperatures between 10-19 degrees Celsius. Its function is as follows. Ionotropic glutamate receptor that functions as a cation-permeable ligand-gated ion channel, gated by L-glutamate and the glutamatergic agonist kainic acid. L-glutamate acts as an excitatory neurotransmitter at many synapses in the central nervous system. Binding of the excitatory neurotransmitter L-glutamate induces a conformation change, leading to the opening of the cation channel, and thereby converts the chemical signal to an electrical impulse. The receptor then desensitizes rapidly and enters a transient inactive state, characterized by the presence of bound agonist. Modulates cell surface expression of NETO2. In association with GRIK3, involved in presynaptic facilitation of glutamate release at hippocampal mossy fiber synapses. Functionally, independent of its ionotropic glutamate receptor activity, acts as a thermoreceptor conferring sensitivity to cold temperatures. Functions in dorsal root ganglion neurons. The sequence is that of Glutamate receptor ionotropic, kainate 2 (GRIK2) from Macaca fascicularis (Crab-eating macaque).